The primary structure comprises 157 residues: Jacalin-related lectin 15 (157 aa).

The Jacalin-type lectin domain occupies 13–152 (ADKLEAKGGN…LTSLGAYFAP (140 aa)).

This sequence belongs to the jacalin lectin family. Expressed in stems, leaves and flowers. Not detected in roots.

Functionally, confers broad resistance to potexviruses. Inhibits virus accumulation at the cellular level. The protein is Jacalin-related lectin 15 (JAL15) of Arabidopsis thaliana (Mouse-ear cress).